Consider the following 339-residue polypeptide: uncharacterized protein (339 aa).

Zn(2+) is bound by residues histidine 17, histidine 19, histidine 197, and aspartate 278. Aspartate 279 lines the substrate pocket.

This sequence belongs to the metallo-dependent hydrolases superfamily. Adenosine and AMP deaminases family. Adenine deaminase type 2 subfamily. Requires Zn(2+) as cofactor.

It is found in the cytoplasm. The protein localises to the nucleus. This is an uncharacterized protein from Schizosaccharomyces pombe (strain 972 / ATCC 24843) (Fission yeast).